The following is a 487-amino-acid chain: UDP-N-acetylmuramate--L-alanine ligase (487 aa).

Position 126–132 (Gly126–Thr132) interacts with ATP.

Belongs to the MurCDEF family.

It is found in the cytoplasm. The catalysed reaction is UDP-N-acetyl-alpha-D-muramate + L-alanine + ATP = UDP-N-acetyl-alpha-D-muramoyl-L-alanine + ADP + phosphate + H(+). The protein operates within cell wall biogenesis; peptidoglycan biosynthesis. Its function is as follows. Cell wall formation. This is UDP-N-acetylmuramate--L-alanine ligase from Proteus mirabilis (strain HI4320).